A 746-amino-acid polypeptide reads, in one-letter code: H(+)/Cl(-) exchange transporter 5 (746 aa).

Over 1 to 54 (MDFLEEPIPGVGTYDDFNTIDWVREKSRDRDRHREITNRSKESTWALIHSVSDA) the chain is Cytoplasmic. The next 2 helical transmembrane spans lie at 55 to 92 (FSGW…ICTE) and 138 to 161 (VNYF…VKVF). The Selectivity filter part_1 motif lies at 167-171 (GSGIP). S168 is a binding site for chloride. Positions 170–177 (IPEIKTIL) form an intramembrane region, helical. A run of 2 helical transmembrane segments spans residues 186–205 (LGKW…VSSG) and 211–230 (EGPL…HCFN). Positions 209-213 (GKEGP) match the Selectivity filter part_2 motif. 2 intramembrane regions (helical) span residues 242-254 (VLSA…VSVA) and 258-266 (PIGGVLFSL). 5 helical membrane passes run 278–296 (LWRS…RSIN), 319–344 (LVPF…IAWC), 352–372 (LGKY…ILAF), 428–448 (MWQL…TFGM), and 453–472 (GLFI…LGVG). Residues 453–457 (GLFIP) carry the Selectivity filter part_3 motif. F455 contributes to the chloride binding site. An intramembrane region (helical) is located at residues 500–514 (GLYAMVGAAACLGGV). The note=Loop between two helices intramembrane region spans 515-517 (TRM). The helical intramembrane region spans 518–529 (TVSLVVIMFELT). An intramembrane region (note=Loop between two helices) is located at residues 530 to 534 (GGLEY). A helical membrane pass occupies residues 535–552 (IVPLMAAAMTSKWVADAL). The Cytoplasmic segment spans residues 553–746 (GREGIYDAHI…NQDPDSILFN (194 aa)). Y558 provides a ligand contact to chloride. CBS domains lie at 586 to 650 (MKPR…ARKE) and 682 to 742 (ILDL…DPDS). Residues T596, 617-619 (YSG), and 724-727 (TKKD) contribute to the ATP site.

Belongs to the chloride channel (TC 2.A.49) family. ClC-5/CLCN5 subfamily. Interacts with NEDD4 and NEDD4L. Ubiquitinated by NEDD4L in the presence of albumin; which promotes endocytosis and proteasomal degradation. As to expression, detected in duodenum, jejunum and ileum. Detected in crypt and villus regions of the epithelium of the small intestine.

Its subcellular location is the golgi apparatus membrane. The protein resides in the endosome membrane. The protein localises to the cell membrane. It carries out the reaction 2 chloride(in) + H(+)(out) = 2 chloride(out) + H(+)(in). Its function is as follows. Proton-coupled chloride transporter. Functions as antiport system and exchanges chloride ions against protons. Important for normal acidification of the endosome lumen. May play an important role in renal tubular function. The CLC channel family contains both chloride channels and proton-coupled anion transporters that exchange chloride or another anion for protons. The absence of conserved gating glutamate residues is typical for family members that function as channels. The sequence is that of H(+)/Cl(-) exchange transporter 5 (CLCN5) from Cavia porcellus (Guinea pig).